A 217-amino-acid chain; its full sequence is Flagellin B2 (217 aa).

Residues 1–12 constitute a propeptide that is removed on maturation; that stretch reads MKVFEFLKGKRG.

It belongs to the archaeal flagellin family.

The protein resides in the archaeal flagellum. In terms of biological role, flagellin is the subunit protein which polymerizes to form the filaments of archaeal flagella. The sequence is that of Flagellin B2 (flaB2) from Methanocaldococcus jannaschii (strain ATCC 43067 / DSM 2661 / JAL-1 / JCM 10045 / NBRC 100440) (Methanococcus jannaschii).